A 326-amino-acid polypeptide reads, in one-letter code: Fructose-1,6-bisphosphatase class 1 (326 aa).

This sequence belongs to the FBPase class 1 family. As to quaternary structure, homotetramer.

It is found in the cytoplasm. The enzyme catalyses beta-D-fructose 1,6-bisphosphate + H2O = beta-D-fructose 6-phosphate + phosphate. Its pathway is carbohydrate biosynthesis; gluconeogenesis. This Methylobacterium sp. (strain 4-46) protein is Fructose-1,6-bisphosphatase class 1.